The sequence spans 659 residues: UvrABC system protein B (659 aa).

Residues 25-412 (QSIENGNRGQ…SEIVAEQIIR (388 aa)) form the Helicase ATP-binding domain. 38–45 (GVTGSGKT) is an ATP binding site. Residues 91–114 (YYDYYQPEAYVPQTDTFIEKDASI) carry the Beta-hairpin motif. The Helicase C-terminal domain occupies 429–582 (QIDDLYGEIQ…QMEYNEEHNI (154 aa)). Residues 622 to 657 (EKLIEQYEEEMKEAAKNLQFERAAELRDIIKDLKEN) enclose the UVR domain.

Belongs to the UvrB family. Forms a heterotetramer with UvrA during the search for lesions. Interacts with UvrC in an incision complex.

Its subcellular location is the cytoplasm. In terms of biological role, the UvrABC repair system catalyzes the recognition and processing of DNA lesions. A damage recognition complex composed of 2 UvrA and 2 UvrB subunits scans DNA for abnormalities. Upon binding of the UvrA(2)B(2) complex to a putative damaged site, the DNA wraps around one UvrB monomer. DNA wrap is dependent on ATP binding by UvrB and probably causes local melting of the DNA helix, facilitating insertion of UvrB beta-hairpin between the DNA strands. Then UvrB probes one DNA strand for the presence of a lesion. If a lesion is found the UvrA subunits dissociate and the UvrB-DNA preincision complex is formed. This complex is subsequently bound by UvrC and the second UvrB is released. If no lesion is found, the DNA wraps around the other UvrB subunit that will check the other stand for damage. This chain is UvrABC system protein B, found in Clostridium perfringens (strain 13 / Type A).